Reading from the N-terminus, the 498-residue chain is Cystathionine beta-synthase (498 aa).

The interval 1–25 (MSAPEGPSKCTWTPNTTENTPHTTR) is disordered. The segment covering 11–22 (TWTPNTTENTPH) has biased composition (low complexity). Residue Lys-73 is modified to N6-(pyridoxal phosphate)lysine. Residues Asn-103, 210-214 (GTGGT), and Ser-302 each bind pyridoxal 5'-phosphate. 2 CBS domains span residues 374–430 (TLPK…KKAV) and 435–497 (VSKV…SQQK).

Belongs to the cysteine synthase/cystathionine beta-synthase family. Pyridoxal 5'-phosphate is required as a cofactor.

The enzyme catalyses L-homocysteine + L-serine = L,L-cystathionine + H2O. It participates in amino-acid biosynthesis; L-cysteine biosynthesis; L-cysteine from L-homocysteine and L-serine: step 1/2. The sequence is that of Cystathionine beta-synthase (cysB) from Dictyostelium discoideum (Social amoeba).